The following is a 99-amino-acid chain: NADH-quinone oxidoreductase subunit K (99 aa).

3 consecutive transmembrane segments (helical) span residues 3 to 23 (PDNY…GVML), 28 to 48 (IVVF…FVTF), and 59 to 79 (VIAF…LGII).

The protein belongs to the complex I subunit 4L family. As to quaternary structure, NDH-1 is composed of 14 different subunits. Subunits NuoA, H, J, K, L, M, N constitute the membrane sector of the complex.

Its subcellular location is the cell membrane. The catalysed reaction is a quinone + NADH + 5 H(+)(in) = a quinol + NAD(+) + 4 H(+)(out). NDH-1 shuttles electrons from NADH, via FMN and iron-sulfur (Fe-S) centers, to quinones in the respiratory chain. The immediate electron acceptor for the enzyme in this species is believed to be a menaquinone. Couples the redox reaction to proton translocation (for every two electrons transferred, four hydrogen ions are translocated across the cytoplasmic membrane), and thus conserves the redox energy in a proton gradient. This Mycobacteroides abscessus (strain ATCC 19977 / DSM 44196 / CCUG 20993 / CIP 104536 / JCM 13569 / NCTC 13031 / TMC 1543 / L948) (Mycobacterium abscessus) protein is NADH-quinone oxidoreductase subunit K.